The chain runs to 571 residues: Ferroportin (571 aa).

Residues 1-23 (MTRAGDHNRQRGCCGSLADYLTS) are Cytoplasmic-facing. A helical membrane pass occupies residues 24 to 53 (AKFLLYLGHSLSTWGDRMWHFAVSVFLVEL). Residues D39 and H43 each contribute to the Fe cation site. Topologically, residues 54–57 (YGNS) are extracellular. The chain crosses the membrane as a helical span at residues 58–84 (LLLTAVYGLVVAGSVLVLGAIIGDWVD). Over 85–87 (KNA) the chain is Cytoplasmic. Residues 88–118 (RLKVAQTSLVVQNVSVILCGIILMMVFLHKH) form a helical membrane-spanning segment. Topologically, residues 119–126 (ELLTMYHG) are extracellular. Residues 127-162 (WVLTSCYILIITIANIANLASTATAITIQRDWIVVV) traverse the membrane as a helical segment. At 163-164 (AG) the chain is on the cytoplasmic side. The helical transmembrane segment at 165-195 (EDRSKLANMNATIRRIDQLTNILAPMAVGQI) threads the bilayer. The Extracellular portion of the chain corresponds to 196-202 (MTFGSPV). Residues 203–229 (IGCGFISGWNLVSMCVEYVLLWKVYQK) traverse the membrane as a helical segment. Topologically, residues 230 to 306 (TPALAVKAGL…DGWVSYYNQP (77 aa)) are cytoplasmic. Residues 307–333 (VFLAGMGLAFLYMTVLGFDCITTGYAY) form a helical membrane-spanning segment. C326 lines the Fe cation pocket. The Extracellular segment spans residues 334-338 (TQGLS). The chain crosses the membrane as a helical span at residues 339–366 (GSILSILMGASAITGIMGTVAFTWLRRK). Residues 367–368 (CG) are Cytoplasmic-facing. A helical membrane pass occupies residues 369–391 (LVRTGLISGLAQLSCLILCVISV). The Extracellular segment spans residues 392-453 (FMPGSPLDLS…ETSPESVPII (62 aa)). A glycan (N-linked (GlcNAc...) asparagine) is linked at N434. The helical transmembrane segment at 454–483 (SVSLLFAGVIAARIGLWSFDLTVTQLLQEN) threads the bilayer. Over 484 to 488 (VIESE) the chain is Cytoplasmic. Residues 489-513 (RGIINGVQNSMNYLLDLLHFIMVIL) form a helical membrane-spanning segment. Position 507 (H507) interacts with Fe cation. Residues 514 to 516 (APN) lie on the Extracellular side of the membrane. A helical membrane pass occupies residues 517-542 (PEAFGLLVLISVSFVAMGHIMYFRFA). At 543–571 (QNTLGNKLFACGPDAKEVRKENQANTSVV) the chain is on the cytoplasmic side.

This sequence belongs to the ferroportin (FP) (TC 2.A.100) family. SLC40A subfamily. As to quaternary structure, identified in a complex with STOM. Interacts with HAMP; affinity of the peptide hormone HAMP for SLC40A1 increases by 80-fold in the presence of iron and the interaction promotes SLC40A1 ubiquitination and degradation. Part of a complex composed of SLC40A1/ferroportin, TF/transferrin and HEPH/hephaestin that transfers iron from cells to transferrin. In terms of processing, polyubiquitinated by RNF217; leading to proteasomal degradation. Under conditions of high systemic iron levels, both the hormone peptide hepcidin/HAMP and holo(iron bound)-transferrin/TF induce the ubiquitination, internalization and proteasomal degradation of SLC40A1 to control iron release from cells. Detected in erythrocytes (at protein level). Expressed in placenta, intestine, muscle and spleen. Highly expressed in mature red blood.

It localises to the cell membrane. The protein resides in the basolateral cell membrane. It carries out the reaction Fe(2+)(in) = Fe(2+)(out). Its function is as follows. Transports Fe(2+) from the inside of a cell to the outside of the cell, playing a key role for maintaining systemic iron homeostasis. Transports iron from intestinal, splenic, hepatic cells, macrophages and erythrocytes into the blood to provide iron to other tissues. Controls therefore dietary iron uptake, iron recycling by macrophages and erythrocytes, and release of iron stores in hepatocytes. When iron is in excess in serum, circulating HAMP/hepcidin levels increase resulting in a degradation of SLC40A1, thus limiting the iron efflux to plasma. The sequence is that of Ferroportin from Homo sapiens (Human).